The following is a 199-amino-acid chain: Putative 3-methyladenine DNA glycosylase (199 aa).

The protein belongs to the DNA glycosylase MPG family.

In Chlorobium phaeobacteroides (strain BS1), this protein is Putative 3-methyladenine DNA glycosylase.